A 3423-amino-acid polypeptide reads, in one-letter code: MKNPKKKSGGFRIVNMLKRGVARVSPFGGLKRLPAGLLLGHGPIRMVLAILAFLRFTAIKPSLGLINRWGSVGKKEAMEIIKKFKKDLAAMLRIINARKEKKRRGTDTSVGIVGLLLTTAMAVEVTRRGNAYYMYLDRSDAGEAISFPTTMGMNKCYIQIMDLGHMCDATMSYECPMLDEGVEPDDVDCWCNTTSTWVVYGTCHHKKGEARRSRRAVTLPSHSTRKLQTRSQTWLESREYTKHLIRVENWIFRNPGFALAAAAIAWLLGSSTSQKVIYLVMILLIAPAYSIRCIGVSNRDFVEGMSGGTWVDVVLEHGGCVTVMAQDKPTVDIELVTTTVSNMAEVRSYCYEASISDMASDSRCPTQGEAYLDKQSDTQYVCKRTLVDRGWGNGCGLFGKGSLVTCAKFACSKKMTGKSIQPENLEYRIMLSVHGSQHSGMIVNDTGHETDENRAKVEITPNSPRAEATLGGFGSLGLDCEPRTGLDFSDLYYLTMNNKHWLVHKEWFHDIPLPWHAGADTGTPHWNNKEALVEFKDAHAKRQTVVVLGSQEGAVHTALAGALEAEMDGAKGRLSSGHLKCRLKMDKLRLKGVSYSLCTAAFTFTKIPAETLHGTVTVEVQYAGTDGPCKVPAQMAVDMQTLTPVGRLITANPVITESTENSKMMLELDPPFGDSYIVIGVGEKKITHHWHRSGSTIGKAFEATVRGAKRMAVLGDTAWDFGSVGGALNSLGKGIHQIFGAAFKSLFGGMSWFSQILIGTLLVWLGLNTKNGSISLMCLALGGVLIFLSTAVSADVGCSVDFSKKETRCGTGVFVYNDVEAWRDRYKYHPDSPRRLAAAVKQAWEDGICGISSVSRMENIMWRSVEGELNAILEENGVQLTVVVGSVKNPMWRGPQRLPVPVNELPHGWKAWGKSYFVRAAKTNNSFVVDGDTLKECPLKHRAWNSFLVEDHGFGVFHTSVWLKVREDYSLECDPAVIGTAAKGKEAVHSDLGYWIESEKNDTWRLKRAHLIEMKTCEWPKSHTLWTDGIEESDLIIPKSLAGPLSHHNTREGYRTQMKGPWHSEELEIRFEECPGTKVHVEETCGTRGPSLRSTTASGRVIEEWCCRECTMPPLSFRAKDGCWYGMEIRPRKEPESNLVRSMVTAGSTDHMDHFSLGVLVILLMVQEGLKKRMTTKIIISTSMAVLVAMILGGFSMSDLAKLAILMGATFAEMNTGGDVAHLALIAAFKVRPALLVSFIFRANWTPRESMLLALASCLLQTAISALEGDLMVPINGFALAWLAIRAMVVPRTDNITLAILAALTPLARGTLLVAWRAGLATCGGFMLLSLKGKGSVKKNLPFVMALGLTAVRLVDPINVVGLLLLTRSGKRSWPPSEVLTAVGLICALAGGFAKADIEMAGPMAAVGLLIVSYVVSGKSVDMYIERAGDITWEKDAEVTGNSPRLDVALDESGDFSLVEDDGPPMREIILKVVLMAICGMNPIAIPFAAGAWYVYVKTGKRSGALWDVPAPKEVKKGETTDGVYRVMTRRLLGSTQVGVGVMQEGVFHTMWHVTKGSALRSGEGRLDPYWGDVKQDLVSYCGPWKLDAAWDGHSEVQLLAVPPGERARNIQTLPGIFKTKDGDIGAVALDYPAGTSGSPILDKCGRVIGLYGNGVVIKNGSYVSAITQGRREEETPVECFEPSMLKKKQLTVLDLHPGAGKTRRVLPEIVREAIKTRLRTVILAPTRVVAAEMEEALRGLPVRYMTTAVNVTHSGTEIVDLMCHATFTSRLLQPIRVPNYNLYIMDEAHFTDPSSIAARGYISTRVEMGEAAAIFMTATPPGTRDAFPDSNSPIMDTEVEVPERAWSSGFDWVTDHSGKTVWFVPSVRNGNEIAACLTKAGKRVIQLSRKTFETEFQKTKHQEWDFVVTTDISEMGANFKADRVIDSRRCLKPVILDGERVILAGPMPVTHASAAQRRGRIGRNPNKPGDEYLYGGGCAETDEDHAHWLEARMLLDNIYLQDGLIASLYRPEADKVAAIEGEFKLRTEQRKTFVELMKRGDLPVWLAYQVASAGITYTDRRWCFDGTTNNTIMEDSVPAEVWTRYGEKRVLKPRWMDARVCSDHAALKSFKEFAAGKRGAAFGVMEALGTLPGHMTERFQEAIDNLAVLMRAETGSRPYKAAAAQLPETLETIMLLGLLGTVSLGIFFVLMRNKGIGKMGFGMVTLGASAWLMWLSEIEPARIACVLIVVFLLLVVLIPEPEKQRSPQDNQMAIIIMVAVGLLGLITANELGWLERTKSDLSHLMGRREEGATIGFSMDIDLRPASAWAIYAALTTFITPAVQHAVTTSYNNYSLMAMATQAGVLFGMGKGMPFYAWDFGVPLLMIGCYSQLTPLTLIVAIILLVAHYMYLIPGLQAAAARAAQKRTAAGIMKNPVVDGIVVTDIDTMTIDPQVEKKMGQVLLIAVAVSSAILSRTAWGWGEAGALITAATSTLWEGSPNKYWNSSTATSLCNIFRGSYLAGASLIYTVTRNAGLVKRRGGGTGETLGEKWKARLNQMSALEFYSYKKSGITEVCREEARRALKDGVATGGHAVSRGSAKLRWLVERGYLQPYGKVIDLGCGRGGWSYYAATIRKVQEVKGYTKGGPGHEEPMLVQSYGWNIVRLKSGVDVFHMAAEPCDTLLCDIGESSSSPEVEEARTLRVLSMVGDWLEKRPGAFCIKVLCPYTSTMMETLERLQRRYGGGLVRVPLSRNSTHEMYWVSGAKSNTIKSVSTTSQLLLGRMDGPRRPVKYEEDVNLGSGTRAVVSCAEAPNMKIIGNRIERIRSEHAETWFFDENHPYRTWAYHGSYEAPTQGSASSLINGVVRLLSKPWDVVTGVTGIAMTDTTPYGQQRVFKEKVDTRVPDPQEGTRQVMSMVSSWLWKELGKHKRPRVCTKEEFINKVRSNAALGAIFEEEKEWKTAVEAVNDPRFWALVDKEREHHLRGECQSCVYNMMGKREKKQGEFGKAKGSRAIWYMWLGARFLEFEALGFLNEDHWMGRENSGGGVEGLGLQRLGYVLEEMSRIPGGRMYADDTAGWDTRISRFDLENEALITNQMEKGHRALALAIIKYTYQNKVVKVLRPAEKGKTVMDIISRQDQRGSGQVVTYALNTFTNLVVQLIRNMEAEEVLEMQDLWLLRRSEKVTNWLQSNGWDRLKRMAVSGDDCVVKPIDDRFAHALRFLNDMGKVRKDTQEWKPSTGWDNWEEVPFCSHHFNKLHLKDGRSIVVPCRHQDELIGRARVSPGAGWSIRETACLAKSYAQMWQLLYFHRRDLRLMANAICSSVPVDWVPTGRTTWSIHGKGEWMTTEDMLVVWNRVWIEENDHMEDKTPVTKWTDIPYLGKREDLWCGSLIGHRPRTTWAENIKNTVNMMRRIIGDEEKYVDYLSTQVRYLGEEGSTPGVL.

Residues 1-25 form a disordered region; the sequence is MKNPKKKSGGFRIVNMLKRGVARVS. The Cytoplasmic portion of the chain corresponds to 1–104; the sequence is MKNPKKKSGG…INARKEKKRR (104 aa). Residues 37–72 form a hydrophobic; homodimerization of capsid protein C region; sequence LLLGHGPIRMVLAILAFLRFTAIKPSLGLINRWGSV. Residues 105–122 constitute a propeptide, ER anchor for capsid protein C, removed in mature form by serine protease NS3; it reads GTDTSVGIVGLLLTTAMA. A helical membrane pass occupies residues 105–125; the sequence is GTDTSVGIVGLLLTTAMAVEV. The Extracellular portion of the chain corresponds to 126–249; the sequence is TRRGNAYYMY…YTKHLIRVEN (124 aa). Residue Asn-192 is glycosylated (N-linked (GlcNAc...) asparagine; by host). A helical transmembrane segment spans residues 250–269; that stretch reads WIFRNPGFALAAAAIAWLLG. Topologically, residues 270–274 are cytoplasmic; it reads SSTSQ. The helical transmembrane segment at 275-290 threads the bilayer; it reads KVIYLVMILLIAPAYS. Residues 291-745 lie on the Extracellular side of the membrane; the sequence is IRCIGVSNRD…HQIFGAAFKS (455 aa). Lys-328 participates in a covalent cross-link: Glycyl lysine isopeptide (Lys-Gly) (interchain with G-Cter in ubiquitin). 2 cysteine pairs are disulfide-bonded: Cys-350–Cys-406 and Cys-382–Cys-411. Residues 388 to 401 are fusion peptide; sequence DRGWGNGCGLFGKG. N-linked (GlcNAc...) asparagine; by host glycosylation occurs at Asn-444. Intrachain disulfides connect Cys-480/Cys-581 and Cys-598/Cys-629. Lys-571 participates in a covalent cross-link: Glycyl lysine isopeptide (Lys-Gly) (interchain with G-Cter in ubiquitin). A helical transmembrane segment spans residues 746 to 767; that stretch reads LFGGMSWFSQILIGTLLVWLGL. The Cytoplasmic portion of the chain corresponds to 768–773; sequence NTKNGS. A helical transmembrane segment spans residues 774–794; that stretch reads ISLMCLALGGVLIFLSTAVSA. Topologically, residues 795–1177 are lumenal; it reads DVGCSVDFSK…EGLKKRMTTK (383 aa). 6 disulfide bridges follow: Cys-798–Cys-809, Cys-849–Cys-937, Cys-973–Cys-1017, Cys-1074–Cys-1123, Cys-1085–Cys-1106, and Cys-1107–Cys-1110. N-linked (GlcNAc...) asparagine; by host glycans are attached at residues Asn-924 and Asn-1001. The chain crosses the membrane as a helical span at residues 1178–1198; it reads IIISTSMAVLVAMILGGFSMS. Residues 1199–1220 are Cytoplasmic-facing; sequence DLAKLAILMGATFAEMNTGGDV. The chain crosses the membrane as a helical span at residues 1221–1241; sequence AHLALIAAFKVRPALLVSFIF. The Lumenal segment spans residues 1242-1270; sequence RANWTPRESMLLALASCLLQTAISALEGD. Residues 1271–1291 form a helical membrane-spanning segment; sequence LMVPINGFALAWLAIRAMVVP. Residues 1292-1295 lie on the Cytoplasmic side of the membrane; that stretch reads RTDN. A helical transmembrane segment spans residues 1296–1316; sequence ITLAILAALTPLARGTLLVAW. Topologically, residues 1317–1345 are lumenal; sequence RAGLATCGGFMLLSLKGKGSVKKNLPFVM. A helical transmembrane segment spans residues 1346–1366; it reads ALGLTAVRLVDPINVVGLLLL. Residues 1367-1373 lie on the Cytoplasmic side of the membrane; that stretch reads TRSGKRS. The chain crosses the membrane as a helical span at residues 1374-1394; the sequence is WPPSEVLTAVGLICALAGGFA. The Lumenal portion of the chain corresponds to 1395–1397; the sequence is KAD. The helical transmembrane segment at 1398 to 1418 threads the bilayer; sequence IEMAGPMAAVGLLIVSYVVSG. Residues 1419–1472 are Cytoplasmic-facing; that stretch reads KSVDMYIERAGDITWEKDAEVTGNSPRLDVALDESGDFSLVEDDGPPMREIILK. An interacts with and activates NS3 protease region spans residues 1425-1464; sequence IERAGDITWEKDAEVTGNSPRLDVALDESGDFSLVEDDGP. The segment at 1429–1451 is disordered; it reads GDITWEKDAEVTGNSPRLDVALD. Residues 1473 to 1493 constitute an intramembrane region (helical); that stretch reads VVLMAICGMNPIAIPFAAGAW. At 1494 to 2170 the chain is on the lumenal side; the sequence is YVYVKTGKRS…KAAAAQLPET (677 aa). The Peptidase S7 domain maps to 1503-1680; sequence SGALWDVPAP…RREEETPVEC (178 aa). Residues His-1553, Asp-1577, and Ser-1637 each act as charge relay system; for serine protease NS3 activity in the active site. The Helicase ATP-binding domain maps to 1683–1839; sequence PSMLKKKQLT…DSNSPIMDTE (157 aa). The interval 1687–1690 is important for RNA-binding; that stretch reads KKKQ. 1696–1703 serves as a coordination point for ATP; the sequence is LHPGAGKT. Positions 1787–1790 match the DEAH box motif; it reads DEAH. The region spanning 1834 to 2013 is the Helicase C-terminal domain; sequence PIMDTEVEVP…GLIASLYRPE (180 aa). Lys-1891 carries the post-translational modification N6-acetyllysine; by host. Residues 2171-2191 traverse the membrane as a helical segment; the sequence is LETIMLLGLLGTVSLGIFFVL. The Lumenal portion of the chain corresponds to 2192–2195; the sequence is MRNK. Positions 2196-2216 form an intramembrane region, helical; it reads GIGKMGFGMVTLGASAWLMWL. Residues 2217–2218 lie on the Cytoplasmic side of the membrane; the sequence is SE. Residues 2219 to 2239 form a helical membrane-spanning segment; the sequence is IEPARIACVLIVVFLLLVVLI. Residues 2240-2254 lie on the Lumenal side of the membrane; sequence PEPEKQRSPQDNQMA. The segment at residues 2255-2269 is an intramembrane region (helical); sequence IIIMVAVGLLGLITA. The Lumenal portion of the chain corresponds to 2270-2307; it reads NELGWLERTKSDLSHLMGRREEGATIGFSMDIDLRPAS. Residues 2308–2328 constitute an intramembrane region (helical); sequence AWAIYAALTTFITPAVQHAVT. Over 2329-2344 the chain is Lumenal; sequence TSYNNYSLMAMATQAG. Residues 2345 to 2365 traverse the membrane as a helical segment; sequence VLFGMGKGMPFYAWDFGVPLL. At 2366-2375 the chain is on the cytoplasmic side; sequence MIGCYSQLTP. The chain crosses the membrane as a helical span at residues 2376-2396; sequence LTLIVAIILLVAHYMYLIPGL. The Lumenal portion of the chain corresponds to 2397 to 2441; that stretch reads QAAAARAAQKRTAAGIMKNPVVDGIVVTDIDTMTIDPQVEKKMGQ. A helical transmembrane segment spans residues 2442–2462; the sequence is VLLIAVAVSSAILSRTAWGWG. Topologically, residues 2463 to 3423 are cytoplasmic; sequence EAGALITAAT…GEEGSTPGVL (961 aa). One can recognise an mRNA cap 0-1 NS5-type MT domain in the interval 2521–2785; that stretch reads GGGTGETLGE…DVNLGSGTRA (265 aa). 2533–2539 provides a ligand contact to GTP; that stretch reads KARLNQM. An S-adenosyl-L-methionine-binding site is contributed by Ser-2576. Position 2576 is a phosphoserine (Ser-2576). The active-site For 2'-O-MTase activity is the Lys-2581. The SUMO-interacting motif (SIM) stretch occupies residues 2597–2600; it reads VIDL. S-adenosyl-L-methionine-binding residues include Gly-2606, Trp-2607, Thr-2624, Lys-2625, His-2630, Glu-2631, Asp-2651, Val-2652, Asp-2666, and Ile-2667. The For 2'-O-MTase activity role is filled by Asp-2666. Position 2669-2675 (2669-2675) interacts with GTP; that stretch reads ESSSSPE. Lys-2702 (for 2'-O-MTase activity) is an active-site residue. 2733–2735 is a GTP binding site; it reads RNS. Glu-2738 functions as the For 2'-O-MTase activity in the catalytic mechanism. Tyr-2740 lines the S-adenosyl-L-methionine pocket. The Nuclear localization signal (NLS) signature appears at 2908–2914; that stretch reads KHKRPRV. Zn(2+) contacts are provided by Glu-2959, His-2963, Cys-2968, and Cys-2971. The 151-residue stretch at 3049–3199 folds into the RdRp catalytic domain; the sequence is GRMYADDTAG…KPIDDRFAHA (151 aa). Positions 3234, 3250, and 3369 each coordinate Zn(2+).

It in the N-terminal section; belongs to the class I-like SAM-binding methyltransferase superfamily. mRNA cap 0-1 NS5-type methyltransferase family. Homodimer. Interacts with host SERTAD3; this interaction promotes capsid protein C degradation. Interacts with host CAPRIN1; this interaction is probably linked to the inhibition of stress granules formation by the virus. Interacts with host G3BP1; this interaction is probably linked to the inhibition of stress granules formation by the virus. In terms of assembly, forms heterodimers with envelope protein E in the endoplasmic reticulum and Golgi. Interacts with non-structural protein 2A. As to quaternary structure, homodimer; in the endoplasmic reticulum and Golgi. Interacts with host TYRO3, AXL and DC-SIGN proteins. Interacts with non-structural protein 2A. Interacts with host HAVCR1; this interaction likely mediates virus attachment to host cell. Interacts with host NCAM1. Interacts with host HSPA5. Interacts with Aedes aegypti SRPN25, APY and venom allergen-1 salivary proteins; the interactions do not affect Zika virus replication in human endothelial cells and keratinocytes. Homodimer; Homohexamer when secreted. Interacts with host TBK1. Interacts with host USP8. Interacts with envelope protein E. In terms of assembly, interacts with the structural protein prM/E complex, and the NS2B/NS3 protease complex. As to quaternary structure, forms a heterodimer with serine protease NS3. May form homooligomers. Interacts with human SPCS1. Interacts with non-structural protein 2A. Forms a heterodimer with NS2B. Interacts with NS4B. Interacts with unphosphorylated RNA-directed RNA polymerase NS5; this interaction stimulates RNA-directed RNA polymerase NS5 guanylyltransferase activity. Interacts with non-structural protein 2A. Interacts with host SHFL; this interaction promotes NS3 degradation via a lysosome-dependent pathway. Interacts with host CEP63; this interaction disorganizes the centrosome and inhibits host innate immune response. In terms of assembly, may interact with host ANKLE2; the interaction may cause defects in brain development, such as microcephaly. May interact with host SRPRA and SEC61G. As to quaternary structure, interacts with serine protease NS3. Interacts with NS1. Homodimer. Interacts with host STAT2; this interaction inhibits the phosphorylation of the latter, and, when all viral proteins are present (polyprotein), targets STAT2 for degradation. Interacts with host TBK1 and IKBKE; these interactions lead to the inhibition of the host RIG-I signaling pathway. Interacts with host PAF1 complex; the interaction may prevent the recruitment of the host PAF1 complex to interferon-responsive genes, and thus reduces the immune response. Interacts with serine protease NS3. Interacts with host KPNA2. Interacts with host ZSWIM8; this interaction allows STAT2 binding to ZSWIM8 and subsequent proteasomal degradation leading to inhibition of interferon signaling. In terms of processing, specific enzymatic cleavages in vivo yield mature proteins. Cleavages in the lumen of endoplasmic reticulum are performed by host signal peptidase, whereas cleavages in the cytoplasmic side are performed by serine protease NS3. Signal cleavage at the 2K-4B site requires a prior NS3 protease-mediated cleavage at the 4A-2K site. Cleaved in post-Golgi vesicles by a host furin, releasing the mature small envelope protein M, and peptide pr. This cleavage is incomplete as up to 30% of viral particles still carry uncleaved prM. Post-translationally, N-glycosylation plays a role in virulence in mammalian and mosquito hosts, but may have no effect on neurovirulence. In terms of processing, ubiquitination by host TRIM7 promotes virus attachment and fusion of the virus and the host endosome membrane. N-glycosylated. The excreted form is glycosylated, which is required for efficient secretion of the protein from infected cells. Post-translationally, ubiquitination by host TRIM22 leads to proteasomal degradation. In terms of processing, acetylated by host KAT5. Acetylation modulates NS3 RNA-binding and unwinding activities and plays an important positive role for viral replication. Phosphorylated on serines residues. This phosphorylation may trigger NS5 nuclear localization. Post-translationally, sumoylated, required for regulating IFN induced interferon stimulated genes/ISGs.

The protein resides in the virion. Its subcellular location is the host nucleus. The protein localises to the host cytoplasm. It is found in the host perinuclear region. It localises to the secreted. The protein resides in the virion membrane. Its subcellular location is the host endoplasmic reticulum membrane. The protein localises to the host cell surface. It catalyses the reaction a 5'-end (5'-triphosphoguanosine)-ribonucleoside in mRNA + S-adenosyl-L-methionine = a 5'-end (N(7)-methyl 5'-triphosphoguanosine)-ribonucleoside in mRNA + S-adenosyl-L-homocysteine. The catalysed reaction is a 5'-end (N(7)-methyl 5'-triphosphoguanosine)-ribonucleoside in mRNA + S-adenosyl-L-methionine = a 5'-end (N(7)-methyl 5'-triphosphoguanosine)-(2'-O-methyl-ribonucleoside) in mRNA + S-adenosyl-L-homocysteine + H(+). It carries out the reaction RNA(n) + a ribonucleoside 5'-triphosphate = RNA(n+1) + diphosphate. The enzyme catalyses Selective hydrolysis of -Xaa-Xaa-|-Yaa- bonds in which each of the Xaa can be either Arg or Lys and Yaa can be either Ser or Ala.. It catalyses the reaction a ribonucleoside 5'-triphosphate + H2O = a ribonucleoside 5'-diphosphate + phosphate + H(+). The catalysed reaction is ATP + H2O = ADP + phosphate + H(+). In terms of biological role, plays a role in virus budding by binding to the cell membrane and gathering the viral RNA into a nucleocapsid that forms the core of the mature virus particle. During virus entry, may induce genome penetration into the host cytoplasm after hemifusion induced by the surface proteins. Can migrate to the cell nucleus where it modulates host functions. Inhibits the integrated stress response (ISR) in the infected cell. Inhibits RNA silencing by interfering with host Dicer. Its function is as follows. Prevents premature fusion activity of envelope proteins in trans-Golgi by binding to envelope protein E at pH 6.0. After virion release in extracellular space, gets dissociated from E dimers. Functionally, plays a role in host immune defense modulation and protection of envelope protein E during virion synthesis. PrM-E cleavage is inefficient, many virions are only partially matured and immature prM-E proteins could play a role in immune evasion. Contributes to fetal microcephaly in humans. Acts as a chaperone for envelope protein E during intracellular virion assembly by masking and inactivating envelope protein E fusion peptide. prM is the only viral peptide matured by host furin in the trans-Golgi network probably to avoid catastrophic activation of the viral fusion activity in acidic Golgi compartment prior to virion release. In terms of biological role, may play a role in virus budding. Exerts cytotoxic effects by activating a mitochondrial apoptotic pathway through M ectodomain. May display a viroporin activity. Binds to host cell surface receptors and mediates fusion between viral and cellular membranes. Efficient virus attachment to cell is, at least in part, mediated by host HAVCR1 in a cell-type specific manner. In addition, host NCAM1 can also be used as entry receptor. Interaction with host HSPA5 plays an important role in the early stages of infection as well. Envelope protein is synthesized in the endoplasmic reticulum and forms a heterodimer with protein prM. The heterodimer plays a role in virion budding in the ER, and the newly formed immature particle is covered with 60 spikes composed of heterodimers between precursor prM and envelope protein E. The virion is transported to the Golgi apparatus where the low pH causes the dissociation of PrM-E heterodimers and formation of E homodimers. PrM-E cleavage is inefficient, many virions are only partially matured and immature prM-E proteins could play a role in immune evasion. Its function is as follows. Plays a role in the inhibition of host RLR-induced interferon-beta activation by targeting TANK-binding kinase 1/TBK1. In addition, recruits the host deubiquitinase USP8 to cleave 'Lys-11'-linked polyubiquitin chains from caspase-1/CASP1 thus inhibiting its proteasomal degradation. In turn, stabilized CASP1 promotes cleavage of cGAS, which inhibits its ability to recognize mitochondrial DNA release and initiate type I interferon signaling. Functionally, component of the viral RNA replication complex that recruits genomic RNA, the structural protein prM/E complex, and the NS2B/NS3 protease complex to the virion assembly site and orchestrates virus morphogenesis. Also antagonizes the host alpha/beta interferon antiviral response. May disrupt adherens junction formation and thereby impair proliferation of radial cells in the host cortex. In terms of biological role, required cofactor for the serine protease function of NS3. Displays three enzymatic activities: serine protease, NTPase and RNA helicase. NS3 serine protease, in association with NS2B, performs its autocleavage and cleaves the polyprotein at dibasic sites in the cytoplasm: C-prM, NS2A-NS2B, NS2B-NS3, NS3-NS4A, NS4A-2K and NS4B-NS5. NS3 RNA helicase binds RNA and unwinds dsRNA in the 3' to 5' direction. Leads to translation arrest when expressed ex vivo. Disrupts host centrosome organization in a CEP63-dependent manner to degrade host TBK1 and inhibits innate immune response. Inhibits the integrated stress response (ISR) in the infected cell. Its function is as follows. Regulates the ATPase activity of the NS3 helicase activity. NS4A allows NS3 helicase to conserve energy during unwinding. Cooperatively with NS4B suppresses the Akt-mTOR pathway and leads to cellular dysregulation. By inhibiting host ANKLE2 functions, may cause defects in brain development, such as microcephaly. Also antagonizes the host MDA5-mediated induction of alpha/beta interferon antiviral response. Leads to translation arrest when expressed ex vivo. Inhibits the integrated stress response (ISR) in the infected cell. Functionally, functions as a signal peptide for NS4B and is required for the interferon antagonism activity of the latter. In terms of biological role, induces the formation of ER-derived membrane vesicles where the viral replication takes place. Also plays a role in the inhibition of host RLR-induced interferon-beta production at TANK-binding kinase 1/TBK1 level. Cooperatively with NS4A suppresses the Akt-mTOR pathway and leads to cellular dysregulation. Replicates the viral (+) and (-) RNA genome, and performs the capping of genomes in the cytoplasm. Methylates viral RNA cap at guanine N-7 and ribose 2'-O positions. Once sufficient NS5 is expressed, binds to the cap-proximal structure and inhibits further translation of the viral genome. Besides its role in RNA genome replication, also prevents the establishment of a cellular antiviral state by blocking the interferon-alpha/beta (IFN-alpha/beta) signaling pathway. Mechanistically, interferes with host kinases TBK1 and IKKE upstream of interferon regulatory factor 3/IRF3 to inhibit the RIG-I pathway. Also antagonizes type I interferon signaling by targeting STAT2 for degradation by the proteasome thereby preventing activation of JAK-STAT signaling pathway. Mechanistically, acts as a scaffold protein to connect host ZSWIM8/CUL3 ligase complex and STAT2, leading to STAT2 degradation. Within the host nucleus, disrupts host SUMO1 and STAT2 co-localization with PML, resulting in PML degradation. May also reduce immune responses by preventing the recruitment of the host PAF1 complex to interferon-responsive genes. This Zika virus (isolate ZIKV/Human/Cambodia/FSS13025/2010) (ZIKV) protein is Genome polyprotein.